Here is a 352-residue protein sequence, read N- to C-terminus: Carbohydrate sulfotransferase 11 (352 aa).

The Cytoplasmic segment spans residues 1 to 16 (MKQTILDLMRMSRICR). A helical; Signal-anchor for type II membrane protein transmembrane segment spans residues 17–37 (MVLATCLGSFILVIFYFQSMF). Over 38–352 (QPVMRRNPFA…YSIPSYLKLQ (315 aa)) the chain is Lumenal. 3'-phosphoadenylyl sulfate-binding positions include 124–130 (PKVACTN) and 186–194 (REPFERLVS). N205, N223, N321, and N342 each carry an N-linked (GlcNAc...) asparagine glycan.

The protein belongs to the sulfotransferase 2 family.

Its subcellular location is the golgi apparatus membrane. It carries out the reaction chondroitin beta-D-glucuronate + n 3'-phosphoadenylyl sulfate = chondroitin 4'-sulfate + n adenosine 3',5'-bisphosphate + n H(+). Functionally, catalyzes the transfer of sulfate to position 4 of the N-acetylgalactosamine (GalNAc) residue of chondroitin. The polypeptide is Carbohydrate sulfotransferase 11 (chst11) (Danio rerio (Zebrafish)).